We begin with the raw amino-acid sequence, 257 residues long: Protein vip1 (257 aa).

An RRM domain is found at 3 to 76 (NQVIVTNISP…NKIQITSEDG (74 aa)). The tract at residues 74–99 (EDGGAASTTDQGGAGGDQAARQEDKP) is disordered. Low complexity predominate over residues 75–84 (DGGAASTTDQ). 2 positions are modified to phosphoserine: S132 and S177. The interval 217–257 (ARRLADAKNQAEGTASPASSTPTAPAEKEPTAPTTESKTTE) is disordered. Position 230 is a phosphothreonine (T230). Residues 230 to 257 (TASPASSTPTAPAEKEPTAPTTESKTTE) show a composition bias toward low complexity. A phosphoserine mark is found at S232 and S235.

The sequence is that of Protein vip1 (vip1) from Schizosaccharomyces pombe (strain 972 / ATCC 24843) (Fission yeast).